Reading from the N-terminus, the 348-residue chain is Flagellar P-ring protein (348 aa).

Positions 1 to 16 are cleaved as a signal peptide; that stretch reads MRVLTIFLLFMTSIFA.

The protein belongs to the FlgI family. The basal body constitutes a major portion of the flagellar organelle and consists of four rings (L,P,S, and M) mounted on a central rod.

It localises to the periplasm. It is found in the bacterial flagellum basal body. Assembles around the rod to form the L-ring and probably protects the motor/basal body from shearing forces during rotation. The polypeptide is Flagellar P-ring protein (Campylobacter jejuni subsp. doylei (strain ATCC BAA-1458 / RM4099 / 269.97)).